The sequence spans 337 residues: tRNA N6-adenosine threonylcarbamoyltransferase (337 aa).

The Fe cation site is built by H111 and H115. Residues 134-138 (LVSGG), D167, G180, and N272 contribute to the substrate site. Residue D300 coordinates Fe cation.

Belongs to the KAE1 / TsaD family. It depends on Fe(2+) as a cofactor.

It localises to the cytoplasm. It carries out the reaction L-threonylcarbamoyladenylate + adenosine(37) in tRNA = N(6)-L-threonylcarbamoyladenosine(37) in tRNA + AMP + H(+). Functionally, required for the formation of a threonylcarbamoyl group on adenosine at position 37 (t(6)A37) in tRNAs that read codons beginning with adenine. Is involved in the transfer of the threonylcarbamoyl moiety of threonylcarbamoyl-AMP (TC-AMP) to the N6 group of A37, together with TsaE and TsaB. TsaD likely plays a direct catalytic role in this reaction. The polypeptide is tRNA N6-adenosine threonylcarbamoyltransferase (Nitrosomonas europaea (strain ATCC 19718 / CIP 103999 / KCTC 2705 / NBRC 14298)).